The chain runs to 466 residues: 55 kDa erythrocyte membrane protein (466 aa).

T2 carries the post-translational modification N-acetylthreonine. Residues S13 and S19 each carry the phosphoserine modification. Phosphothreonine is present on T49. Phosphoserine occurs at positions 52, 57, and 110. The PDZ domain occupies 71–152 (LIQFEKVTEE…MISLKVIPNQ (82 aa)). Residues 158 to 228 (ALQMFMRAQF…PSPELQEWRV (71 aa)) enclose the SH3 domain. Phosphoserine is present on S243. The tract at residues 268-466 (VVSYEEVVRL…PQWVPVSWVY (199 aa)) is interaction with PALS1. A Guanylate kinase-like domain is found at 282–451 (RKTLVLIGAS…TLKKLQEAFD (170 aa)).

This sequence belongs to the MAGUK family. In terms of assembly, heterodimer with PALS1. Interacts with DLG5 and NF2. Interacts (via guanylate kinase-like domain) with WHRN (via third PDZ domain). Palmitoylated.

The protein localises to the cell membrane. Its subcellular location is the cell projection. It localises to the stereocilium. Essential regulator of neutrophil polarity. Regulates neutrophil polarization by regulating AKT1 phosphorylation through a mechanism that is independent of PIK3CG activity. The protein is 55 kDa erythrocyte membrane protein (MPP1) of Pongo abelii (Sumatran orangutan).